The primary structure comprises 435 residues: Glutamyl-tRNA reductase (435 aa).

Substrate is bound by residues 50–53 (TCNR), S110, 115–117 (ESQ), and Q121. The active-site Nucleophile is the C51. An NADP(+)-binding site is contributed by 191–196 (GAGDMG).

It belongs to the glutamyl-tRNA reductase family. As to quaternary structure, homodimer.

It carries out the reaction (S)-4-amino-5-oxopentanoate + tRNA(Glu) + NADP(+) = L-glutamyl-tRNA(Glu) + NADPH + H(+). The protein operates within porphyrin-containing compound metabolism; protoporphyrin-IX biosynthesis; 5-aminolevulinate from L-glutamyl-tRNA(Glu): step 1/2. Catalyzes the NADPH-dependent reduction of glutamyl-tRNA(Glu) to glutamate 1-semialdehyde (GSA). The chain is Glutamyl-tRNA reductase from Sulfurovum sp. (strain NBC37-1).